A 259-amino-acid polypeptide reads, in one-letter code: MSYTPSEFRQQIRSRRLSGPTAGYCGDYAQANLAILPKQHADDFLRFCTLNPKACPLLGIGEPGDWRVPALGADLDIRNDVPAFYVYRHGERAEEVRSLDELWRDDLVVFAIGCSFSFEEMLRREGIALRHIEQQVNVPMYRTRERNVAAGVFGGNRVVSMRPMKAADAIRAIQITSRFPAVHGAPVHIGDPSLIGIRDLASPDFGDAVEVRSDELPVFWACGVTPQAAIESARLPFAIAHKPGHMLVTDIPNTTLAVL.

Belongs to the D-glutamate cyclase family.

The chain is Putative hydro-lyase Bphyt_4813 from Paraburkholderia phytofirmans (strain DSM 17436 / LMG 22146 / PsJN) (Burkholderia phytofirmans).